Here is a 129-residue protein sequence, read N- to C-terminus: MAKQATRVRRRERKNILSGVVHINSTFNNTMVTITDAQGNAIAWSSAGAQGFKGSRKSTPFAAQVAAEDCARKAQEHGMRSLEVEVCGPGAGRESALRALQSAGFVITSIRDVTPIPHNGCRPRKRRRV.

The protein belongs to the universal ribosomal protein uS11 family. In terms of assembly, part of the 30S ribosomal subunit. Interacts with proteins S7 and S18. Binds to IF-3.

Located on the platform of the 30S subunit, it bridges several disparate RNA helices of the 16S rRNA. Forms part of the Shine-Dalgarno cleft in the 70S ribosome. The chain is Small ribosomal subunit protein uS11 from Bartonella quintana (strain Toulouse) (Rochalimaea quintana).